Here is a 290-residue protein sequence, read N- to C-terminus: Acetyl-coenzyme A carboxylase carboxyl transferase subunit beta (290 aa).

The region spanning 27 to 290 (LWVKCPSCEA…LQRQPADALA (264 aa)) is the CoA carboxyltransferase N-terminal domain. Zn(2+) is bound by residues cysteine 31, cysteine 34, cysteine 50, and cysteine 53. A C4-type zinc finger spans residues 31–53 (CPSCEAVLYRNDVDANLHVCPKC).

The protein belongs to the AccD/PCCB family. As to quaternary structure, acetyl-CoA carboxylase is a heterohexamer composed of biotin carboxyl carrier protein (AccB), biotin carboxylase (AccC) and two subunits each of ACCase subunit alpha (AccA) and ACCase subunit beta (AccD). Zn(2+) is required as a cofactor.

It localises to the cytoplasm. The enzyme catalyses N(6)-carboxybiotinyl-L-lysyl-[protein] + acetyl-CoA = N(6)-biotinyl-L-lysyl-[protein] + malonyl-CoA. The protein operates within lipid metabolism; malonyl-CoA biosynthesis; malonyl-CoA from acetyl-CoA: step 1/1. Its function is as follows. Component of the acetyl coenzyme A carboxylase (ACC) complex. Biotin carboxylase (BC) catalyzes the carboxylation of biotin on its carrier protein (BCCP) and then the CO(2) group is transferred by the transcarboxylase to acetyl-CoA to form malonyl-CoA. This chain is Acetyl-coenzyme A carboxylase carboxyl transferase subunit beta, found in Burkholderia cenocepacia (strain ATCC BAA-245 / DSM 16553 / LMG 16656 / NCTC 13227 / J2315 / CF5610) (Burkholderia cepacia (strain J2315)).